The sequence spans 79 residues: Acyl carrier protein (79 aa).

Residues 2 to 77 (SEIADKVKKI…DAIDYIEKQK (76 aa)) form the Carrier domain. S37 carries the O-(pantetheine 4'-phosphoryl)serine modification.

It belongs to the acyl carrier protein (ACP) family. In terms of processing, 4'-phosphopantetheine is transferred from CoA to a specific serine of apo-ACP by AcpS. This modification is essential for activity because fatty acids are bound in thioester linkage to the sulfhydryl of the prosthetic group.

The protein resides in the cytoplasm. It participates in lipid metabolism; fatty acid biosynthesis. In terms of biological role, carrier of the growing fatty acid chain in fatty acid biosynthesis. This Gluconacetobacter diazotrophicus (strain ATCC 49037 / DSM 5601 / CCUG 37298 / CIP 103539 / LMG 7603 / PAl5) protein is Acyl carrier protein.